Consider the following 357-residue polypeptide: Homoserine kinase (357 aa).

It belongs to the GHMP kinase family. Homoserine kinase subfamily.

It carries out the reaction L-homoserine + ATP = O-phospho-L-homoserine + ADP + H(+). Its pathway is amino-acid biosynthesis; L-threonine biosynthesis; L-threonine from L-aspartate: step 4/5. Functionally, commits homoserine to the threonine biosynthesis pathway by catalyzing its O-phosphorylation. The sequence is that of Homoserine kinase from Cryptococcus neoformans var. grubii serotype A (strain H99 / ATCC 208821 / CBS 10515 / FGSC 9487) (Filobasidiella neoformans var. grubii).